The chain runs to 447 residues: UDP-N-acetylmuramate--L-alanine ligase (447 aa).

An ATP-binding site is contributed by 108–114 (GSHGKTS).

The protein belongs to the MurCDEF family.

It localises to the cytoplasm. It catalyses the reaction UDP-N-acetyl-alpha-D-muramate + L-alanine + ATP = UDP-N-acetyl-alpha-D-muramoyl-L-alanine + ADP + phosphate + H(+). It participates in cell wall biogenesis; peptidoglycan biosynthesis. In terms of biological role, cell wall formation. This chain is UDP-N-acetylmuramate--L-alanine ligase, found in Listeria monocytogenes serotype 4a (strain HCC23).